A 496-amino-acid chain; its full sequence is MKLRELLATVDSVENLPPVLADTEVKGIKTNSHACGAGDLFIGMPGTRVDGGEFWPSAIASGAIAAIVSPQAVEKNPPSDEAVVISSNNMTKACAAIAAAFYGYPGQKLKLVGVTGTNGKTTTTHLIEFFLTKAQLSTALMGTLYTRWPGFEQTATHTTPFAVELQQQLAQAVNAGCEFGVMEVSSHALAQGRVLGCPFEVGVFSNLTQDHLDYHSDMEDYFAAKALLFSPDYLKGRAIINADDTYGQRLIKALSPEKVWSYSVNDSSADLWMSDLSYEPNGVTGTIHTPEGDVSFRSPLVGQYNLENLLASVGAVLHLGLDLQLIANAIPEFPGVPGRMERVQINPDQDISVIVDYAHTPDSLENLLKAARPFIPGRMICVFGCGGDRDRTKRPKMGKIAAELADLAFVTSDNPRTEDPEKILDDILAGIPDTVQPTVIGDRAIAIRTAILQAQPGDGVLLAGKGHEDYQILGTEKIHFDDREHARAALTEREKL.

UDP-N-acetyl-alpha-D-muramoyl-L-alanyl-D-glutamate is bound at residue Ser32. 116-122 (GTNGKTT) serves as a coordination point for ATP. UDP-N-acetyl-alpha-D-muramoyl-L-alanyl-D-glutamate contacts are provided by residues 158 to 159 (TT), Ser185, Gln191, and Arg193. N6-carboxylysine is present on Lys225. Meso-2,6-diaminopimelate contacts are provided by residues Arg389, 413–416 (DNPR), Gly464, and Glu468. The Meso-diaminopimelate recognition motif signature appears at 413-416 (DNPR).

The protein belongs to the MurCDEF family. MurE subfamily. Requires Mg(2+) as cofactor. In terms of processing, carboxylation is probably crucial for Mg(2+) binding and, consequently, for the gamma-phosphate positioning of ATP.

It is found in the cytoplasm. The enzyme catalyses UDP-N-acetyl-alpha-D-muramoyl-L-alanyl-D-glutamate + meso-2,6-diaminopimelate + ATP = UDP-N-acetyl-alpha-D-muramoyl-L-alanyl-gamma-D-glutamyl-meso-2,6-diaminopimelate + ADP + phosphate + H(+). Its pathway is cell wall biogenesis; peptidoglycan biosynthesis. Functionally, catalyzes the addition of meso-diaminopimelic acid to the nucleotide precursor UDP-N-acetylmuramoyl-L-alanyl-D-glutamate (UMAG) in the biosynthesis of bacterial cell-wall peptidoglycan. The protein is UDP-N-acetylmuramoyl-L-alanyl-D-glutamate--2,6-diaminopimelate ligase of Trichormus variabilis (strain ATCC 29413 / PCC 7937) (Anabaena variabilis).